The sequence spans 502 residues: Glycerate kinase (502 aa).

This sequence belongs to the glycerate kinase type-2 family.

The protein resides in the cytoplasm. It catalyses the reaction (R)-glycerate + ATP = (2R)-3-phosphoglycerate + ADP + H(+). The polypeptide is Glycerate kinase (glyctk) (Danio rerio (Zebrafish)).